The chain runs to 299 residues: Glycine--tRNA ligase alpha subunit (299 aa).

The protein belongs to the class-II aminoacyl-tRNA synthetase family. Tetramer of two alpha and two beta subunits.

It is found in the cytoplasm. The enzyme catalyses tRNA(Gly) + glycine + ATP = glycyl-tRNA(Gly) + AMP + diphosphate. The polypeptide is Glycine--tRNA ligase alpha subunit (glyQ) (Synechocystis sp. (strain ATCC 27184 / PCC 6803 / Kazusa)).